The following is a 713-amino-acid chain: Polyribonucleotide nucleotidyltransferase (713 aa).

2 residues coordinate Mg(2+): Asp-485 and Asp-491. In terms of domain architecture, KH spans 552-611 (PRIHTIKINPEKIKDVIGKGGSVIRALTEETGTNIELDDDGTVRISAVANEAAMEAIRRI). The S1 motif domain occupies 621-689 (NRIYEGKVVR…RQGRVRLSIK (69 aa)).

The protein belongs to the polyribonucleotide nucleotidyltransferase family. As to quaternary structure, component of the RNA degradosome, which is a multiprotein complex involved in RNA processing and mRNA degradation. It depends on Mg(2+) as a cofactor.

Its subcellular location is the cytoplasm. The catalysed reaction is RNA(n+1) + phosphate = RNA(n) + a ribonucleoside 5'-diphosphate. Its function is as follows. Involved in mRNA degradation. Catalyzes the phosphorolysis of single-stranded polyribonucleotides processively in the 3'- to 5'-direction. The chain is Polyribonucleotide nucleotidyltransferase from Aeromonas salmonicida (strain A449).